Consider the following 687-residue polypeptide: Glycine--tRNA ligase beta subunit (687 aa).

Belongs to the class-II aminoacyl-tRNA synthetase family. In terms of assembly, tetramer of two alpha and two beta subunits.

The protein resides in the cytoplasm. It carries out the reaction tRNA(Gly) + glycine + ATP = glycyl-tRNA(Gly) + AMP + diphosphate. This Geobacter sp. (strain M21) protein is Glycine--tRNA ligase beta subunit.